The chain runs to 72 residues: Translation initiation factor IF-1 (72 aa).

An S1-like domain is found at 1 to 72 (MAREDHIEME…SKGRIVYRAR (72 aa)).

This sequence belongs to the IF-1 family. In terms of assembly, component of the 30S ribosomal translation pre-initiation complex which assembles on the 30S ribosome in the order IF-2 and IF-3, IF-1 and N-formylmethionyl-tRNA(fMet); mRNA recruitment can occur at any time during PIC assembly.

The protein localises to the cytoplasm. In terms of biological role, one of the essential components for the initiation of protein synthesis. Stabilizes the binding of IF-2 and IF-3 on the 30S subunit to which N-formylmethionyl-tRNA(fMet) subsequently binds. Helps modulate mRNA selection, yielding the 30S pre-initiation complex (PIC). Upon addition of the 50S ribosomal subunit IF-1, IF-2 and IF-3 are released leaving the mature 70S translation initiation complex. This Chromohalobacter salexigens (strain ATCC BAA-138 / DSM 3043 / CIP 106854 / NCIMB 13768 / 1H11) protein is Translation initiation factor IF-1.